A 130-amino-acid chain; its full sequence is Small ribosomal subunit protein uS11c (130 aa).

The protein belongs to the universal ribosomal protein uS11 family. As to quaternary structure, part of the 30S ribosomal subunit.

The protein localises to the plastid. It is found in the chloroplast. The protein is Small ribosomal subunit protein uS11c of Pinus koraiensis (Korean pine).